Here is a 95-residue protein sequence, read N- to C-terminus: Sec-independent protein translocase protein TatA (95 aa).

Residues 1–21 (MGGISIWQLLIIALIVVLLFG) traverse the membrane as a helical segment. The segment covering 50–61 (KALEDNAADKPA) has biased composition (basic and acidic residues). The segment at 50–95 (KALEDNAADKPAADAAKVTETAKVAETAPVAETAEKKAESKGKEQA) is disordered. Over residues 62 to 81 (ADAAKVTETAKVAETAPVAE) the composition is skewed to low complexity. Residues 82 to 95 (TAEKKAESKGKEQA) show a composition bias toward basic and acidic residues.

It belongs to the TatA/E family. As to quaternary structure, the Tat system comprises two distinct complexes: a TatABC complex, containing multiple copies of TatA, TatB and TatC subunits, and a separate TatA complex, containing only TatA subunits. Substrates initially bind to the TatABC complex, which probably triggers association of the separate TatA complex to form the active translocon.

It is found in the cell inner membrane. Part of the twin-arginine translocation (Tat) system that transports large folded proteins containing a characteristic twin-arginine motif in their signal peptide across membranes. TatA could form the protein-conducting channel of the Tat system. This is Sec-independent protein translocase protein TatA from Shewanella halifaxensis (strain HAW-EB4).